Here is a 1087-residue protein sequence, read N- to C-terminus: Collagen alpha-2(I) chain (1087 aa).

Residues 1-931 are disordered; sequence APDPGPGPMG…PGPAGGGYDV (931 aa). Low complexity-rich tracts occupy residues 83–120, 150–159, and 166–187; these read EPGA…AAGP, EPGPNGAVGP, and PGNN…AGAP. The span at 189–199 shows a compositional bias: pro residues; the sequence is FPGPRGGPGPQ. Over residues 201–211 the composition is skewed to low complexity; it reads PQGAAGQRGLA. The span at 218 to 227 shows a compositional bias: gly residues; the sequence is GVKGDGGPKG. Composition is skewed to low complexity over residues 228 to 241, 278 to 321, 335 to 345, 360 to 384, and 396 to 408; these read EPGN…PGPQ, AAGP…AGPS, PRGQPGNLGFP, KGAT…TGAT, and QGAA…QGLP. Positions 409-418 are enriched in gly residues; sequence GPAGGAGEAG. The segment covering 443–453 has biased composition (low complexity); that stretch reads NPGAAGASGPQ. The segment covering 466–493 has biased composition (gly residues); the sequence is GTDGGKGEPGAAGAAGGPGHQGPGGMPG. Over residues 504–515 the composition is skewed to basic and acidic residues; the sequence is KGEKGEAGHRGP. 3 stretches are compositionally biased toward low complexity: residues 560–602, 613–640, and 677–695; these read PAGA…TGAR, FPGA…PAGK, and PGPA…LGLQ. Residues 708–717 show a composition bias toward gly residues; that stretch reads GSPGGAGAVG. Low complexity-rich tracts occupy residues 718 to 740 and 776 to 788; these read EPGR…LGLP and PGSS…AGAP. A compositionally biased stretch (gly residues) spans 792–812; the sequence is GPSGGAGRGNRGESGPGGAAG. The span at 813–828 shows a compositional bias: low complexity; it reads AVGPAGARGAAGPSGP. The span at 829-843 shows a compositional bias: basic and acidic residues; the sequence is RGEKGVAGEKGERGL. Composition is skewed to low complexity over residues 849-868 and 897-909; these read LQGM…AGPN and APGA…YVGP. The span at 910-924 shows a compositional bias: pro residues; that stretch reads AGPPGSPGLPGPPGP. A Fibrillar collagen NC1 domain is found at 929 to 1087; sequence YDVSGYDEYR…GLDLGPVCFK (159 aa).

Belongs to the fibrillar collagen family.

The protein resides in the secreted. It is found in the extracellular space. Its subcellular location is the extracellular matrix. In Epinephelus costae (Goldblotch grouper), this protein is Collagen alpha-2(I) chain.